Reading from the N-terminus, the 142-residue chain is Nucleoside diphosphate kinase (142 aa).

K9, F57, R85, T91, R102, and N112 together coordinate ATP. H115 (pros-phosphohistidine intermediate) is an active-site residue.

It belongs to the NDK family. Homotetramer. Requires Mg(2+) as cofactor.

The protein localises to the cytoplasm. It carries out the reaction a 2'-deoxyribonucleoside 5'-diphosphate + ATP = a 2'-deoxyribonucleoside 5'-triphosphate + ADP. The enzyme catalyses a ribonucleoside 5'-diphosphate + ATP = a ribonucleoside 5'-triphosphate + ADP. In terms of biological role, major role in the synthesis of nucleoside triphosphates other than ATP. The ATP gamma phosphate is transferred to the NDP beta phosphate via a ping-pong mechanism, using a phosphorylated active-site intermediate. The chain is Nucleoside diphosphate kinase from Dehalococcoides mccartyi (strain ATCC BAA-2100 / JCM 16839 / KCTC 5957 / BAV1).